Reading from the N-terminus, the 256-residue chain is RNA polymerase sigma factor SigI1 (256 aa).

Residues 67–80 (DEFSIALSAFNEAI) carry the Polymerase core binding motif. Positions 205–224 (RNELKKKAKVHGRTIGNNRK) form a DNA-binding region, H-T-H motif.

Belongs to the sigma-70 factor family. SigI subfamily. As to quaternary structure, interacts with RsgI1.

The protein localises to the cytoplasm. Its activity is regulated as follows. Negatively regulated by the anti-sigma-I factor RsgI1. Binding of the polysaccharide substrate to RsgI1 may lead to the release and activation of SigI1. Functionally, sigma factors are initiation factors that promote the attachment of RNA polymerase to specific initiation sites and are then released. This sigma factor is involved in regulation of cellulosomal genes via an external polysaccharide-sensing mechanism. SigI1 promotes transcription from sigI1 and celS promoters. The sequence is that of RNA polymerase sigma factor SigI1 from Acetivibrio thermocellus (strain ATCC 27405 / DSM 1237 / JCM 9322 / NBRC 103400 / NCIMB 10682 / NRRL B-4536 / VPI 7372) (Clostridium thermocellum).